Consider the following 262-residue polypeptide: Protein crossbronx-like (262 aa).

The region spanning 15 to 179 (RQGYQVLAEY…VQELALFTKK (165 aa)) is the UBC core domain.

The protein belongs to the ubiquitin-conjugating enzyme family. FTS subfamily.

The protein is Protein crossbronx-like of Drosophila pseudoobscura pseudoobscura (Fruit fly).